The chain runs to 400 residues: Tryptophan synthase beta chain (400 aa).

Lys-91 bears the N6-(pyridoxal phosphate)lysine mark.

Belongs to the TrpB family. In terms of assembly, tetramer of two alpha and two beta chains. Requires pyridoxal 5'-phosphate as cofactor.

The catalysed reaction is (1S,2R)-1-C-(indol-3-yl)glycerol 3-phosphate + L-serine = D-glyceraldehyde 3-phosphate + L-tryptophan + H2O. It functions in the pathway amino-acid biosynthesis; L-tryptophan biosynthesis; L-tryptophan from chorismate: step 5/5. In terms of biological role, the beta subunit is responsible for the synthesis of L-tryptophan from indole and L-serine. The polypeptide is Tryptophan synthase beta chain (Listeria monocytogenes serotype 4a (strain HCC23)).